We begin with the raw amino-acid sequence, 385 residues long: MKKPIIEFKNVSKVFEDSNTKVLKDINFELEEGKFYTLLGASGSGKSTILNIIAGLLDATTGDIMLDGVRINDIPTNKRDVHTVFQSYALFPHMNVFENVAFPLRLRKIDKKEIEQRVAEVLKMVQLEGYEKRSIRKLSGGQRQRVAIARAIINQPRVVLLDEPLSALDLKLRTDMQYELRELQQRLGITFVFVTHDQEEALAMSDWIFVMNDGEIVQSGTPVDIYDEPINHFVATFIGESNILPGTMIEDYLVEFNGKRFEAVDGGMKPNEPVEVVIRPEDLRITLPEEGKLQVKVDTQLFRGVHYEIIAYDELGNEWMIHSTRKAIVGEEIGLDFEPEDIHIMRLNETEEEFDARIEEYVEIEEQEAGLINAIEEERDEENKL.

Positions 6–238 (IEFKNVSKVF…PINHFVATFI (233 aa)) constitute an ABC transporter domain. 40-47 (GASGSGKS) contributes to the ATP binding site.

Belongs to the ABC transporter superfamily. Spermidine/putrescine importer (TC 3.A.1.11.1) family. In terms of assembly, the complex is composed of two ATP-binding proteins (PotA), two transmembrane proteins (PotB and PotC) and a solute-binding protein (PotD).

It localises to the cell membrane. The enzyme catalyses ATP + H2O + polyamine-[polyamine-binding protein]Side 1 = ADP + phosphate + polyamineSide 2 + [polyamine-binding protein]Side 1.. Its function is as follows. Part of the ABC transporter complex PotABCD involved in spermidine/putrescine import. Responsible for energy coupling to the transport system. The polypeptide is Spermidine/putrescine import ATP-binding protein PotA (Streptococcus pneumoniae serotype 4 (strain ATCC BAA-334 / TIGR4)).